The sequence spans 432 residues: Glutamate-1-semialdehyde 2,1-aminomutase (432 aa).

Lys265 is modified (N6-(pyridoxal phosphate)lysine).

It belongs to the class-III pyridoxal-phosphate-dependent aminotransferase family. HemL subfamily. Homodimer. Requires pyridoxal 5'-phosphate as cofactor.

The protein localises to the cytoplasm. It catalyses the reaction (S)-4-amino-5-oxopentanoate = 5-aminolevulinate. Its pathway is porphyrin-containing compound metabolism; protoporphyrin-IX biosynthesis; 5-aminolevulinate from L-glutamyl-tRNA(Glu): step 2/2. This Histophilus somni (strain 2336) (Haemophilus somnus) protein is Glutamate-1-semialdehyde 2,1-aminomutase.